The sequence spans 159 residues: 2-C-methyl-D-erythritol 2,4-cyclodiphosphate synthase (159 aa).

Asp-10 and His-12 together coordinate a divalent metal cation. 4-CDP-2-C-methyl-D-erythritol 2-phosphate-binding positions include 10–12 and 36–37; these read DVH and HS. His-44 contacts a divalent metal cation. 4-CDP-2-C-methyl-D-erythritol 2-phosphate is bound by residues 58–60, 63–67, 102–108, 134–137, Phe-141, and Arg-144; these read DIG, FPDTD, AQAPKMA, and TTTE.

It belongs to the IspF family. In terms of assembly, homotrimer. A divalent metal cation is required as a cofactor.

It carries out the reaction 4-CDP-2-C-methyl-D-erythritol 2-phosphate = 2-C-methyl-D-erythritol 2,4-cyclic diphosphate + CMP. It participates in isoprenoid biosynthesis; isopentenyl diphosphate biosynthesis via DXP pathway; isopentenyl diphosphate from 1-deoxy-D-xylulose 5-phosphate: step 4/6. Functionally, involved in the biosynthesis of isopentenyl diphosphate (IPP) and dimethylallyl diphosphate (DMAPP), two major building blocks of isoprenoid compounds. Catalyzes the conversion of 4-diphosphocytidyl-2-C-methyl-D-erythritol 2-phosphate (CDP-ME2P) to 2-C-methyl-D-erythritol 2,4-cyclodiphosphate (ME-CPP) with a corresponding release of cytidine 5-monophosphate (CMP). The protein is 2-C-methyl-D-erythritol 2,4-cyclodiphosphate synthase of Shewanella frigidimarina (strain NCIMB 400).